A 315-amino-acid polypeptide reads, in one-letter code: CRISPR-associated endonuclease Cas1 1 (315 aa).

Positions 144, 208, and 223 each coordinate Mn(2+).

The protein belongs to the CRISPR-associated endonuclease Cas1 family. In terms of assembly, homodimer, forms a heterotetramer with a Cas2 homodimer. It depends on Mg(2+) as a cofactor. The cofactor is Mn(2+).

In terms of biological role, CRISPR (clustered regularly interspaced short palindromic repeat), is an adaptive immune system that provides protection against mobile genetic elements (viruses, transposable elements and conjugative plasmids). CRISPR clusters contain spacers, sequences complementary to antecedent mobile elements, and target invading nucleic acids. CRISPR clusters are transcribed and processed into CRISPR RNA (crRNA). Acts as a dsDNA endonuclease. Involved in the integration of spacer DNA into the CRISPR cassette. This Thermus thermophilus (strain ATCC 27634 / DSM 579 / HB8) protein is CRISPR-associated endonuclease Cas1 1.